Reading from the N-terminus, the 844-residue chain is Eukaryotic translation elongation factor 2 (844 aa).

Positions arginine 17–valine 348 constitute a tr-type G domain. Residue alanine 26–serine 33 coordinates GTP. 2 positions are modified to phosphothreonine: threonine 57 and threonine 59. GTP contacts are provided by residues asparagine 162 to aspartate 165 and serine 219 to leucine 221. Residue histidine 701 is modified to Diphthamide.

The protein belongs to the TRAFAC class translation factor GTPase superfamily. Classic translation factor GTPase family. EF-G/EF-2 subfamily. Phosphorylation by EF-2 kinase completely inactivates eEF2.

The protein localises to the cytoplasm. It catalyses the reaction GTP + H2O = GDP + phosphate + H(+). Catalyzes the GTP-dependent ribosomal translocation step during translation elongation. During this step, the ribosome changes from the pre-translocational (PRE) to the post-translocational (POST) state as the newly formed A-site-bound peptidyl-tRNA and P-site-bound deacylated tRNA move to the P and E sites, respectively. Catalyzes the coordinated movement of the two tRNA molecules, the mRNA and conformational changes in the ribosome. The sequence is that of Eukaryotic translation elongation factor 2 from Drosophila melanogaster (Fruit fly).